The following is a 155-amino-acid chain: Large ribosomal subunit protein uL13 (155 aa).

It belongs to the universal ribosomal protein uL13 family. Part of the 50S ribosomal subunit.

Its function is as follows. This protein is one of the early assembly proteins of the 50S ribosomal subunit, although it is not seen to bind rRNA by itself. It is important during the early stages of 50S assembly. The sequence is that of Large ribosomal subunit protein uL13 from Rickettsia conorii (strain ATCC VR-613 / Malish 7).